The primary structure comprises 333 residues: Nucleoid-associated protein VC0395_A1624/VC395_2154 (333 aa).

Belongs to the YejK family.

It is found in the cytoplasm. The protein localises to the nucleoid. In Vibrio cholerae serotype O1 (strain ATCC 39541 / Classical Ogawa 395 / O395), this protein is Nucleoid-associated protein VC0395_A1624/VC395_2154.